Here is an 889-residue protein sequence, read N- to C-terminus: Phosphatidylinositol 3-kinase VPS34 (889 aa).

One can recognise a C2 PI3K-type domain in the interval 34 to 184 (ASEKLIDPQL…EWIDELVLKK (151 aa)). A PIK helical domain is found at 298–540 (SDKHVKPDAK…ESFLSRLNSN (243 aa)). The 267-residue stretch at 607–873 (MIDQCNVFKS…LINDSVNALL (267 aa)) folds into the PI3K/PI4K catalytic domain. The interval 613–619 (VFKSSLS) is G-loop. Residues 742-750 (GVGDRHLDN) form a catalytic loop region. The interval 761-782 (HADFGYILGQDPKPFPPLMKLP) is activation loop.

It belongs to the PI3/PI4-kinase family. Type III PI4K subfamily. In terms of assembly, component of the autophagy-specific VPS34 PI3-kinase complex I composed of VPS15, VPS30, VPS34, ATG14 and ATG38; and of the VPS34 PI3-kinase complex II composed of VPS15, VPS30, VPS34 and VPS38. In terms of processing, autophosphorylated.

Its subcellular location is the golgi apparatus. The protein localises to the trans-Golgi network membrane. It localises to the endosome membrane. The catalysed reaction is a 1,2-diacyl-sn-glycero-3-phospho-(1D-myo-inositol) + ATP = a 1,2-diacyl-sn-glycero-3-phospho-(1D-myo-inositol-3-phosphate) + ADP + H(+). Functionally, multifunctional phosphatidylinositol 3-kinase that plays a role in signaling in modulation of host immune response, intracellular survival and virulence. Catalytic subunit of the autophagy-specific VPS34 PI3-kinase complex I essential to recruit the ATG8-phosphatidylinositol conjugate and the ATG12-ATG5 conjugate to the pre-autophagosomal structure. Also involved in endosome-to-Golgi retrograde transport as part of the VPS34 PI3-kinase complex II. This second complex is required for the endosome-to-Golgi retrieval of PEP1 and KEX2, and the recruitment of VPS5 and VPS7, two components of the retromer complex, to endosomal membranes (probably through the synthesis of a specific pool of phosphatidylinositol 3-phosphate recruiting the retromer to the endosomes). Finally, it might also be involved in ethanol tolerance and cell wall integrity. The protein is Phosphatidylinositol 3-kinase VPS34 of Candida glabrata (strain ATCC 2001 / BCRC 20586 / JCM 3761 / NBRC 0622 / NRRL Y-65 / CBS 138) (Yeast).